A 326-amino-acid chain; its full sequence is MAAISPLFLLFLIPIIPLSLLAILALIVRPRPIKIPIKSRHAFITGGSSGIGLALAHRAASEGARVSILARSGSKLEEAKKSIQLATGVEVATFSADVRDYDAVSKAIDESGPIDVLIVNQGVFTAKELVKHSPEDVKFTIDVNLVGSFNVIKAALPAMKARKDRGPASISLVSSQAGQVGVYGYAAYSASKFGLQGLAQALQQEVISDDIHVTLIFPPDTNTPGFEEEQKSRPEVTAIIAASSGSMETEEVAKKAMDGIKAGNFTVSCNFEGFLLSLATTGMSPQRSFWLAFLEVITAGPIRLIALFFQWDWYKAIEKWSKTKTK.

Topologically, residues 1 to 7 (MAAISPL) are lumenal. A helical transmembrane segment spans residues 8–28 (FLLFLIPIIPLSLLAILALIV). Over 29–264 (RPRPIKIPIK…KAMDGIKAGN (236 aa)) the chain is Cytoplasmic. 7 residues coordinate NADPH: Gly-46, Ser-48, Ser-49, Gly-50, Arg-71, Lys-75, and Asp-97. Residues 46–50 (GGSSG) carry the GXSXG motif. Ser-174 serves as the catalytic Proton donor. Tyr-188 functions as the Proton acceptor in the catalytic mechanism. NADP(+) contacts are provided by Tyr-188 and Lys-192. The Lowers pKa of active site Tyr role is filled by Lys-192. The chain crosses the membrane as a helical span at residues 265–285 (FTVSCNFEGFLLSLATTGMSP). Residues 286-288 (QRS) are Lumenal-facing. Residues 289–309 (FWLAFLEVITAGPIRLIALFF) form a helical membrane-spanning segment. Over 310–326 (QWDWYKAIEKWSKTKTK) the chain is Cytoplasmic.

The protein belongs to the short-chain dehydrogenases/reductases (SDR) family. As to expression, expressed in roots, leaves, stems, flowers and siliques.

The protein resides in the endoplasmic reticulum membrane. The enzyme catalyses sphinganine + NADP(+) = 3-oxosphinganine + NADPH + H(+). It participates in lipid metabolism; sphingolipid metabolism. Functionally, catalyzes the reduction of 3'-oxosphinganine (3-ketodihydrosphingosine/KDS) to sphinganine (dihydrosphingosine/DHS), the second step of de novo sphingolipid biosynthesis. In plants, sphingolipids seems to play a critical role in mineral ion homeostasis, most likely through their involvement in the ion transport functionalities of membrane systems in the root. Lacks stereospecificity and can also produce L-threo-DHS in addition to D-erythro-DHS. The chain is 3-dehydrosphinganine reductase TSC10A (TSC10A) from Arabidopsis thaliana (Mouse-ear cress).